Here is a 394-residue protein sequence, read N- to C-terminus: ATP phosphoribosyltransferase regulatory subunit (394 aa).

This sequence belongs to the class-II aminoacyl-tRNA synthetase family. HisZ subfamily. As to quaternary structure, heteromultimer composed of HisG and HisZ subunits.

It is found in the cytoplasm. Its pathway is amino-acid biosynthesis; L-histidine biosynthesis; L-histidine from 5-phospho-alpha-D-ribose 1-diphosphate: step 1/9. In terms of biological role, required for the first step of histidine biosynthesis. May allow the feedback regulation of ATP phosphoribosyltransferase activity by histidine. The sequence is that of ATP phosphoribosyltransferase regulatory subunit from Geobacillus kaustophilus (strain HTA426).